A 553-amino-acid polypeptide reads, in one-letter code: Solute carrier family 22 member 4 (553 aa).

Residues 1 to 20 (MRDYDEVIAFLGEWGPFQRL) lie on the Cytoplasmic side of the membrane. The chain crosses the membrane as a helical span at residues 21–41 (IFFLLSASIIPNGFNGMSVVF). Residues 42 to 142 (LAGTPEHRCL…NLVCEDDWKT (101 aa)) are Extracellular-facing. N-linked (GlcNAc...) asparagine glycosylation is found at Asn57, Asn64, and Asn91. A helical transmembrane segment spans residues 143 to 163 (PLTTSLFFVGVLCGSFVSGQL). Topologically, residues 164–171 (SDRFGRKK) are cytoplasmic. The chain crosses the membrane as a helical span at residues 172–192 (VLFATMAVQTGFSFVQIFSTN). Topologically, residues 193–197 (WEMFT) are extracellular. Residues 198–218 (VLFAIVGMGQISNYVVAFILG) form a helical membrane-spanning segment. 218–225 (GTEILSKS) is a binding site for ATP. Over 219–232 (TEILSKSVRIIFST) the chain is Cytoplasmic. Residues 233 to 253 (LGVCTFFAIGYMVLPLFAYFI) traverse the membrane as a helical segment. Over 254–257 (RDWR) the chain is Extracellular. A helical transmembrane segment spans residues 258–278 (MLLLALTLPGLFCVPLWWFIP). Topologically, residues 279–339 (ESPRWLISQR…IILDLFRTRN (61 aa)) are cytoplasmic. Residues 340–360 (IATITVMAVMLWMLTSVGYFA) traverse the membrane as a helical segment. Topologically, residues 361-373 (LSLNVPNLHGDVY) are extracellular. The chain crosses the membrane as a helical span at residues 374–394 (LNCFLSGLIEVPAYFTAWLLL). Residues 395 to 400 (RTLPRR) are Cytoplasmic-facing. The helical transmembrane segment at 401 to 421 (YIIAGVLFWGGGVLLLIQVVP) threads the bilayer. The Extracellular segment spans residues 422 to 428 (EDYNFVS). The chain crosses the membrane as a helical span at residues 429–449 (IGLVMLGKFGITSAFSMLYVF). Topologically, residues 450-462 (TAELYPTLVRNMA) are cytoplasmic. The chain crosses the membrane as a helical span at residues 463–483 (VGITSMASRVGSIIAPYFVYL). The Extracellular segment spans residues 484–488 (GAYNR). Residues 489-509 (LLPYILMGSLTVLIGIITLFF) traverse the membrane as a helical segment. Over 510–553 (PESFGVTLPENLEQMQKVRGFRCGKKSTVSVDREESPKVLITAF) the chain is Cytoplasmic.

This sequence belongs to the major facilitator (TC 2.A.1) superfamily. Organic cation transporter (TC 2.A.1.19) family. Interacts with PDZK1. Expressed in kidney. Expressed in small intestines. Expressed in liver in non-parenchymal liver tissue such as sinusoidal vessels. Weakly expressed in lung and brain. Expressed in testis and spleen. Expressed in heart.

It is found in the apical cell membrane. Its subcellular location is the mitochondrion membrane. It localises to the basal cell membrane. The enzyme catalyses ergothioneine(out) + Na(+)(out) = ergothioneine(in) + Na(+)(in). It catalyses the reaction acetylcholine(in) = acetylcholine(out). It carries out the reaction (R)-carnitine(out) + Na(+)(out) = (R)-carnitine(in) + Na(+)(in). The catalysed reaction is glycine betaine(out) + Na(+)(out) = glycine betaine(in) + Na(+)(in). With respect to regulation, allosterically activated by intracellular ATP. Functionally, transporter that mediates the transport of endogenous and microbial zwitterions and organic cations. Functions as a Na(+)-dependent and pH-dependent high affinity microbial symporter of potent food-derived antioxidant ergothioeine. Transports one sodium ion with one ergothioeine molecule. Involved in the absorption of ergothioneine from the luminal/apical side of the small intestine and renal tubular cells, and into non-parenchymal liver cells, thereby contributing to maintain steady-state ergothioneine level in the body. Also mediates the bidirectional transport of acetycholine, although the exact transport mechanism has not been fully identified yet. Most likely exports anti-inflammatory acetylcholine in non-neuronal tissues, thereby contributing to the non-neuronal cholinergic system. Displays a general physiological role linked to better survival by controlling inflammation and oxidative stress, which may be related to ergothioneine and acetycholine transports. May also function as a low-affinity Na(+)-dependent transporter of L-carnitine through the mitochondrial membrane, thereby maintaining intracellular carnitine homeostasis. May contribute to regulate the transport of cationic compounds in testis across the blood-testis-barrier. The sequence is that of Solute carrier family 22 member 4 from Mus musculus (Mouse).